We begin with the raw amino-acid sequence, 323 residues long: HPr kinase/phosphorylase (323 aa).

Active-site residues include histidine 146 and lysine 167. 161-168 (GESGLGKS) serves as a coordination point for ATP. Serine 168 contacts Mg(2+). Aspartate 185 functions as the Proton acceptor; for phosphorylation activity. Proton donor; for dephosphorylation activity in the catalytic mechanism. The segment at 209–218 (LEVRGLGLLD) is important for the catalytic mechanism of both phosphorylation and dephosphorylation. Residue glutamate 210 coordinates Mg(2+). Arginine 250 is a catalytic residue. Residues 271–276 (QVAAGR) are important for the catalytic mechanism of dephosphorylation.

This sequence belongs to the HPrK/P family. As to quaternary structure, homohexamer. Requires Mg(2+) as cofactor.

It catalyses the reaction [HPr protein]-L-serine + ATP = [HPr protein]-O-phospho-L-serine + ADP + H(+). The catalysed reaction is [HPr protein]-O-phospho-L-serine + phosphate + H(+) = [HPr protein]-L-serine + diphosphate. In terms of biological role, catalyzes the ATP- as well as the pyrophosphate-dependent phosphorylation of a specific serine residue in HPr, a phosphocarrier protein of the phosphoenolpyruvate-dependent sugar phosphotransferase system (PTS). HprK/P also catalyzes the pyrophosphate-producing, inorganic phosphate-dependent dephosphorylation (phosphorolysis) of seryl-phosphorylated HPr (P-Ser-HPr). In Cupriavidus metallidurans (strain ATCC 43123 / DSM 2839 / NBRC 102507 / CH34) (Ralstonia metallidurans), this protein is HPr kinase/phosphorylase.